Consider the following 538-residue polypeptide: Bifunctional purine biosynthesis protein PurH (538 aa).

One can recognise an MGS-like domain in the interval 8-158 (IPAPDKVEIK…KNHAYVTILT (151 aa)).

The protein belongs to the PurH family.

It carries out the reaction (6R)-10-formyltetrahydrofolate + 5-amino-1-(5-phospho-beta-D-ribosyl)imidazole-4-carboxamide = 5-formamido-1-(5-phospho-D-ribosyl)imidazole-4-carboxamide + (6S)-5,6,7,8-tetrahydrofolate. It catalyses the reaction IMP + H2O = 5-formamido-1-(5-phospho-D-ribosyl)imidazole-4-carboxamide. It participates in purine metabolism; IMP biosynthesis via de novo pathway; 5-formamido-1-(5-phospho-D-ribosyl)imidazole-4-carboxamide from 5-amino-1-(5-phospho-D-ribosyl)imidazole-4-carboxamide (10-formyl THF route): step 1/1. Its pathway is purine metabolism; IMP biosynthesis via de novo pathway; IMP from 5-formamido-1-(5-phospho-D-ribosyl)imidazole-4-carboxamide: step 1/1. The sequence is that of Bifunctional purine biosynthesis protein PurH from Rhizobium etli (strain ATCC 51251 / DSM 11541 / JCM 21823 / NBRC 15573 / CFN 42).